The chain runs to 242 residues: tRNA (guanine-N(1)-)-methyltransferase (242 aa).

Residues Gly113 and 133–138 (IGDYVL) contribute to the S-adenosyl-L-methionine site.

Belongs to the RNA methyltransferase TrmD family. Homodimer.

The protein resides in the cytoplasm. The enzyme catalyses guanosine(37) in tRNA + S-adenosyl-L-methionine = N(1)-methylguanosine(37) in tRNA + S-adenosyl-L-homocysteine + H(+). Functionally, specifically methylates guanosine-37 in various tRNAs. The sequence is that of tRNA (guanine-N(1)-)-methyltransferase from Shewanella sediminis (strain HAW-EB3).